The primary structure comprises 128 residues: Cytochrome c oxidase subunit 5B, mitochondrial (128 aa).

A mitochondrion-targeting transit peptide spans 1 to 30 (MKRGSAALEVRELKMQTPTASCVLSTQRAN). Lys67 and Lys85 each carry N6-acetyllysine. Residues Cys90, Cys92, Cys112, and Cys115 each contribute to the Zn(2+) site. Lys120 carries the post-translational modification N6-acetyllysine.

Belongs to the cytochrome c oxidase 5b family. In terms of tissue distribution, expressed in testis. Not expressed in brain, heart, liver, kidney, spleen, lung, duodenum, muscle, epididymis, vagina, uterus and ovary.

It is found in the mitochondrion inner membrane. Its function is as follows. This protein is one of the nuclear-coded polypeptide chains of cytochrome c oxidase, the terminal oxidase in mitochondrial electron transport. The chain is Cytochrome c oxidase subunit 5B, mitochondrial from Vulpes vulpes (Red fox).